The chain runs to 751 residues: Semaphorin-3C (751 aa).

The signal sequence occupies residues 1 to 21 (MAFRTICVLVGVFICSICVKG). In terms of domain architecture, Sema spans 28 to 511 (RVYLTFDELR…SNEGVSQVSL (484 aa)). Residue asparagine 81 is glycosylated (N-linked (GlcNAc...) asparagine). A disulfide bridge links cysteine 101 with cysteine 112. Asparagine 123 carries N-linked (GlcNAc...) asparagine glycosylation. A disulfide bond links cysteine 130 and cysteine 139. N-linked (GlcNAc...) asparagine glycans are attached at residues asparagine 252 and asparagine 268. 2 disulfide bridges follow: cysteine 266–cysteine 378 and cysteine 290–cysteine 338. N-linked (GlcNAc...) asparagine glycosylation occurs at asparagine 465. Cysteine 514 and cysteine 532 are disulfide-bonded. The 85-residue stretch at 571–655 (AYRNAAEIVQ…TENSFKQTIA (85 aa)) folds into the Ig-like C2-type domain. 2 N-linked (GlcNAc...) asparagine glycosylation sites follow: asparagine 585 and asparagine 586. Cysteine 592 and cysteine 643 are oxidised to a cystine. The span at 712-731 (TRQQHQQGDESQKMRGDYGK) shows a compositional bias: basic and acidic residues. The tract at residues 712–751 (TRQQHQQGDESQKMRGDYGKLKALINSRKSRNRRNQLPES) is disordered.

The protein belongs to the semaphorin family. As to quaternary structure, interacts with PLXND1.

Its subcellular location is the secreted. Functionally, binds to plexin family members and plays an important role in the regulation of developmental processes. Required for normal cardiovascular development during embryogenesis. Functions as attractant for growing axons, and thereby plays an important role in axon growth and axon guidance. This Pongo abelii (Sumatran orangutan) protein is Semaphorin-3C (SEMA3C).